The chain runs to 154 residues: Superoxide dismutase [Cu-Zn] (154 aa).

A Glycyl lysine isopeptide (Lys-Gly) (interchain with G-Cter in SUMO) cross-link involves residue Lys-19. Residues Ser-26 and Ser-39 each carry the phosphoserine modification. Glu-43 serves as a coordination point for Zn(2+). Cu cation contacts are provided by His-47, His-49, and His-64. Cysteines 58 and 147 form a disulfide. His-64 is a binding site for Zn(2+). Lys-70 participates in a covalent cross-link: Glycyl lysine isopeptide (Lys-Gly) (interchain with G-Cter in SUMO). Residues His-72, His-81, and Asp-84 each contribute to the Zn(2+) site. Phosphoserine occurs at positions 99 and 117. His-121 contributes to the Cu cation binding site. A phosphothreonine mark is found at Thr-132 and Thr-138. Arg-144 provides a ligand contact to substrate.

This sequence belongs to the Cu-Zn superoxide dismutase family. In terms of assembly, homodimer in holo form. In apo form, heterodimer with CCS1. Zinc-binding at 'His-16' of CCS1 and Glu-43 of apo-SOD1 is required for this heterodimerization. The cofactor is Cu cation. Zn(2+) is required as a cofactor.

The protein localises to the cytoplasm. It localises to the mitochondrion intermembrane space. It carries out the reaction 2 superoxide + 2 H(+) = H2O2 + O2. Destroys radicals which are normally produced within the cells and which are toxic to biological systems. The polypeptide is Superoxide dismutase [Cu-Zn] (Saccharomyces cerevisiae (strain ATCC 204508 / S288c) (Baker's yeast)).